The primary structure comprises 162 residues: Disulfide bond formation protein B (162 aa).

The Cytoplasmic segment spans residues 1–8 (MTPLFRKA). A helical membrane pass occupies residues 9–25 (VWLLFAVSVCAFAGSLA). At 26 to 43 (AQYVLGMEPCVLCISQRL) the chain is on the periplasmic side. A disulfide bond links Cys35 and Cys38. The chain crosses the membrane as a helical span at residues 44-60 (CVLATALCTAIVLMCRP). The Cytoplasmic segment spans residues 61 to 67 (RRRAGGL). A helical membrane pass occupies residues 68–85 (FGAVFISIPAVTGISVAA). At 86–141 (YQLWLQSLPPGTAPSCGAPWTFRLKGWPLFDWFEPVVRGFGNCAEPDYLLGIALPV) the chain is on the periplasmic side. Cys101 and Cys128 are joined by a disulfide. A helical transmembrane segment spans residues 142-160 (WSVAYFLAVVLTVWWAWAR). Over 161 to 162 (AK) the chain is Cytoplasmic.

Belongs to the DsbB family.

The protein resides in the cell inner membrane. Its function is as follows. Required for disulfide bond formation in some periplasmic proteins. Acts by oxidizing the DsbA protein. The sequence is that of Disulfide bond formation protein B from Neisseria meningitidis serogroup B (strain ATCC BAA-335 / MC58).